The following is a 376-amino-acid chain: Carboxylic ester hydrolase LipN (376 aa).

Active-site residues include serine 216, aspartate 316, and histidine 346.

This sequence belongs to the 'GDXG' lipolytic enzyme family.

The protein resides in the cytoplasm. It carries out the reaction a carboxylic ester + H2O = an alcohol + a carboxylate + H(+). It catalyses the reaction an acetyl ester + H2O = an aliphatic alcohol + acetate + H(+). The catalysed reaction is a butanoate ester + H2O = an aliphatic alcohol + butanoate + H(+). The enzyme catalyses an octanoate ester + H2O = an aliphatic alcohol + octanoate + H(+). It carries out the reaction decanoate ester + H2O = decanoate + an aliphatic alcohol + H(+). It catalyses the reaction a dodecanoate ester + H2O = an aliphatic alcohol + dodecanoate + H(+). The catalysed reaction is 1,2,3-tributanoylglycerol + H2O = dibutanoylglycerol + butanoate + H(+). The enzyme catalyses 4-acetoxyphenol + H2O = hydroquinone + acetate + H(+). With respect to regulation, completely inhibited by tetrahydrolipstatin (THL), RHC-80267 and N-bromosuccinimide. Functionally, non specific carboxylic ester hydrolase. Hydrolyzes various pNP-esters, with a preference for short carbon chain substrates. Can also hydrolyze tributyrin to di- and monobutyrin and 4-hydroxyphenylacetate to hydroquinone. This is Carboxylic ester hydrolase LipN from Mycobacterium tuberculosis (strain ATCC 25618 / H37Rv).